Here is a 100-residue protein sequence, read N- to C-terminus: Co-chaperonin GroES (100 aa).

Belongs to the GroES chaperonin family. As to quaternary structure, heptamer of 7 subunits arranged in a ring. Interacts with the chaperonin GroEL.

The protein localises to the cytoplasm. Functionally, together with the chaperonin GroEL, plays an essential role in assisting protein folding. The GroEL-GroES system forms a nano-cage that allows encapsulation of the non-native substrate proteins and provides a physical environment optimized to promote and accelerate protein folding. GroES binds to the apical surface of the GroEL ring, thereby capping the opening of the GroEL channel. The polypeptide is Co-chaperonin GroES (Mycobacterium tuberculosis (strain CDC 1551 / Oshkosh)).